A 107-amino-acid polypeptide reads, in one-letter code: Iron-sulfur cluster assembly protein CyaY (107 aa).

This sequence belongs to the frataxin family.

Its function is as follows. Involved in iron-sulfur (Fe-S) cluster assembly. May act as a regulator of Fe-S biogenesis. The chain is Iron-sulfur cluster assembly protein CyaY from Neisseria meningitidis serogroup C / serotype 2a (strain ATCC 700532 / DSM 15464 / FAM18).